Consider the following 134-residue polypeptide: uncharacterized protein (134 aa).

It to E.coli YbcV and YdfO.

This is an uncharacterized protein from Escherichia coli (strain K12).